The primary structure comprises 98 residues: Ribonuclease kappa (98 aa).

Transmembrane regions (helical) follow at residues 13 to 33 and 65 to 85; these read ACGI…GIFF and VSYN…FSFC.

Belongs to the RNase K family. Interacts with the proton translocation complex V0 of the V-ATPase. Interacts with ATP6AP1.

The protein localises to the endomembrane system. It is found in the cytoplasmic vesicle. It localises to the clathrin-coated vesicle membrane. In terms of biological role, endoribonuclease which preferentially cleaves ApU and ApG phosphodiester bonds. Hydrolyzes UpU bonds at a lower rate. Regulates the activity of vacuolar (H+)-ATPase (V-ATPase) which is responsible for acidifying and maintaining the pH of intracellular compartments. Required at an early stage of receptor-mediated endocytosis. The sequence is that of Ribonuclease kappa (Rnasek) from Mus musculus (Mouse).